The following is a 217-amino-acid chain: ATP phosphoribosyltransferase (217 aa).

The protein belongs to the ATP phosphoribosyltransferase family. Short subfamily. Heteromultimer composed of HisG and HisZ subunits.

Its subcellular location is the cytoplasm. The enzyme catalyses 1-(5-phospho-beta-D-ribosyl)-ATP + diphosphate = 5-phospho-alpha-D-ribose 1-diphosphate + ATP. It functions in the pathway amino-acid biosynthesis; L-histidine biosynthesis; L-histidine from 5-phospho-alpha-D-ribose 1-diphosphate: step 1/9. Its function is as follows. Catalyzes the condensation of ATP and 5-phosphoribose 1-diphosphate to form N'-(5'-phosphoribosyl)-ATP (PR-ATP). Has a crucial role in the pathway because the rate of histidine biosynthesis seems to be controlled primarily by regulation of HisG enzymatic activity. The protein is ATP phosphoribosyltransferase of Burkholderia lata (strain ATCC 17760 / DSM 23089 / LMG 22485 / NCIMB 9086 / R18194 / 383).